A 374-amino-acid chain; its full sequence is Type II methyltransferase M.BbvI (374 aa).

In terms of domain architecture, SAM-dependent MTase C5-type spans 3–347; sequence FRKGELFCGP…EAVLKTFARI (345 aa). Residue Cys92 is part of the active site.

This sequence belongs to the class I-like SAM-binding methyltransferase superfamily. C5-methyltransferase family.

It carries out the reaction a 2'-deoxycytidine in DNA + S-adenosyl-L-methionine = a 5-methyl-2'-deoxycytidine in DNA + S-adenosyl-L-homocysteine + H(+). A methylase, recognizes the double-stranded sequence 5'-GCAGC-3', methylates C-2 on both strands, and protects the DNA from cleavage by the BbvI endonuclease. The chain is Type II methyltransferase M.BbvI (bbvIM) from Brevibacillus brevis (Bacillus brevis).